The chain runs to 288 residues: Protein PXR1 (288 aa).

In terms of domain architecture, G-patch spans 25–72; it reads QSRFGHKHLMRFGWQPGQGLGTQPVQSMKTHIKVSIKDDNLGLGAKLK. The tract at residues 147 to 258 is disordered; the sequence is SYSQMEKDSS…TSIPESVSTR (112 aa). The span at 157 to 166 shows a compositional bias: acidic residues; the sequence is SDEESDDDED. Composition is skewed to basic residues over residues 169 to 185 and 195 to 214; these read KKHK…KKRK and KKKK…KDKK. The segment covering 238–256 has biased composition (low complexity); sequence RTASIESSTSATSIPESVS.

This sequence belongs to the PINX1 family.

The protein localises to the nucleus. It localises to the nucleolus. Involved in rRNA-processing at A0, A1 and A2 sites and negatively regulates telomerase. This is Protein PXR1 (PXR1) from Candida glabrata (strain ATCC 2001 / BCRC 20586 / JCM 3761 / NBRC 0622 / NRRL Y-65 / CBS 138) (Yeast).